Consider the following 172-residue polypeptide: Ribosome maturation factor RimM (172 aa).

Residues 96-170 form the PRC barrel domain; sequence EENEFYFHEI…KITIEVMEGL (75 aa).

This sequence belongs to the RimM family. In terms of assembly, binds ribosomal protein uS19.

The protein localises to the cytoplasm. An accessory protein needed during the final step in the assembly of 30S ribosomal subunit, possibly for assembly of the head region. Essential for efficient processing of 16S rRNA. May be needed both before and after RbfA during the maturation of 16S rRNA. It has affinity for free ribosomal 30S subunits but not for 70S ribosomes. This chain is Ribosome maturation factor RimM, found in Listeria monocytogenes serotype 4b (strain CLIP80459).